Reading from the N-terminus, the 1375-residue chain is DNA-directed RNA polymerase subunit beta (1375 aa).

The protein belongs to the RNA polymerase beta chain family. As to quaternary structure, the RNAP catalytic core consists of 2 alpha, 1 beta, 1 beta' and 1 omega subunit. When a sigma factor is associated with the core the holoenzyme is formed, which can initiate transcription.

It catalyses the reaction RNA(n) + a ribonucleoside 5'-triphosphate = RNA(n+1) + diphosphate. Its function is as follows. DNA-dependent RNA polymerase catalyzes the transcription of DNA into RNA using the four ribonucleoside triphosphates as substrates. The polypeptide is DNA-directed RNA polymerase subunit beta (Methylorubrum populi (strain ATCC BAA-705 / NCIMB 13946 / BJ001) (Methylobacterium populi)).